Reading from the N-terminus, the 239-residue chain is Major prion protein (239 aa).

Residues methionine 1–cysteine 15 form the signal peptide. Residues cysteine 15–lysine 98 form a disordered region. An interaction with ADGRG6 region spans residues lysine 16–tyrosine 31. Residues lysine 16–serine 222 form an interaction with GRB2, ERI3 and SYN1 region. 5 consecutive repeat copies span residues proline 44–glutamine 51, proline 52–glutamine 59, proline 60–glutamine 67, proline 68–glutamine 75, and proline 76–glutamine 83. The 5 X 8 AA tandem repeats of P-H-G-G-G-W-G-Q stretch occupies residues proline 44–glutamine 83. Over residues glycine 47 to threonine 87 the composition is skewed to gly residues. Cu(2+)-binding residues include histidine 53, glycine 54, glycine 55, histidine 61, glycine 62, glycine 63, histidine 69, glycine 70, glycine 71, histidine 77, glycine 78, and glycine 79. Cysteines 171 and 206 form a disulfide. Asparagine 173 and asparagine 189 each carry an N-linked (GlcNAc...) asparagine glycan. Serine 222 is lipidated: GPI-anchor amidated serine. Positions serine 223 to leucine 239 are cleaved as a propeptide — removed in mature form.

The protein belongs to the prion family. In terms of assembly, monomer and homodimer. Has a tendency to aggregate into amyloid fibrils containing a cross-beta spine, formed by a steric zipper of superposed beta-strands. Soluble oligomers may represent an intermediate stage on the path to fibril formation. Copper binding may promote oligomerization. Interacts with GRB2, APP, ERI3/PRNPIP and SYN1. Mislocalized cytosolically exposed PrP interacts with MGRN1; this interaction alters MGRN1 subcellular location and causes lysosomal enlargement. Interacts with APP. Interacts with KIAA1191. Interacts with ADGRG6.

It is found in the cell membrane. The protein localises to the golgi apparatus. Functionally, its primary physiological function is unclear. May play a role in neuronal development and synaptic plasticity. May be required for neuronal myelin sheath maintenance. May promote myelin homeostasis through acting as an agonist for ADGRG6 receptor. May play a role in iron uptake and iron homeostasis. Soluble oligomers are toxic to cultured neuroblastoma cells and induce apoptosis (in vitro). Association with GPC1 (via its heparan sulfate chains) targets PRNP to lipid rafts. Also provides Cu(2+) or Zn(2+) for the ascorbate-mediated GPC1 deaminase degradation of its heparan sulfate side chains. This is Major prion protein (PRNP) from Aotus trivirgatus (Three-striped night monkey).